Reading from the N-terminus, the 561-residue chain is Magnesium-chelatase 60 kDa subunit (561 aa).

2 disordered regions span residues 234-268 (PLQEAPPPPPPPPEPPEPNEGENQQDEQDQIDPLD) and 298-324 (RAASGGQGAGQEQIGNRRGRPLPSRKG). Positions 237 to 249 (EAPPPPPPPPEPP) are enriched in pro residues. A compositionally biased stretch (acidic residues) spans 250–265 (EPNEGENQQDEQDQID). Positions 314–323 (RRGRPLPSRK) are enriched in basic residues. The VWFA domain occupies 379–559 (VLIFAVDASG…KMADVLGAAL (181 aa)).

It belongs to the Mg-chelatase subunits D/I family.

It carries out the reaction protoporphyrin IX + Mg(2+) + ATP + H2O = Mg-protoporphyrin IX + ADP + phosphate + 3 H(+). Its pathway is porphyrin-containing compound metabolism; bacteriochlorophyll biosynthesis. Its function is as follows. Involved in bacteriochlorophyll biosynthesis; introduces a magnesium ion into protoporphyrin IX to yield Mg-protoporphyrin IX. The chain is Magnesium-chelatase 60 kDa subunit (bchD) from Rhodobacter capsulatus (strain ATCC BAA-309 / NBRC 16581 / SB1003).